The primary structure comprises 219 residues: Ribose-5-phosphate isomerase A (219 aa).

Substrate is bound by residues 28–31 (SGST), 81–84 (DGAD), and 94–97 (KGGG). E103 functions as the Proton acceptor in the catalytic mechanism. K121 is a substrate binding site.

Belongs to the ribose 5-phosphate isomerase family. Homodimer.

The catalysed reaction is aldehydo-D-ribose 5-phosphate = D-ribulose 5-phosphate. It participates in carbohydrate degradation; pentose phosphate pathway; D-ribose 5-phosphate from D-ribulose 5-phosphate (non-oxidative stage): step 1/1. In terms of biological role, catalyzes the reversible conversion of ribose-5-phosphate to ribulose 5-phosphate. This chain is Ribose-5-phosphate isomerase A, found in Histophilus somni (strain 129Pt) (Haemophilus somnus).